A 610-amino-acid polypeptide reads, in one-letter code: Replication factor C large subunit (610 aa).

Residue 55-62 coordinates ATP; the sequence is GPAGIGKT. Composition is skewed to basic and acidic residues over residues 467 to 478, 502 to 515, and 594 to 603; these read EKEGNASAEKPE, LPEKKRSSEMKLPE, and DGSKKAEPKN. The disordered stretch occupies residues 467 to 610; that stretch reads EKEGNASAEK…PKNQKTLFDF (144 aa).

It belongs to the activator 1 small subunits family. RfcL subfamily. As to quaternary structure, heteromultimer composed of small subunits (RfcS) and large subunits (RfcL).

Part of the RFC clamp loader complex which loads the PCNA sliding clamp onto DNA. This is Replication factor C large subunit from Methanosarcina mazei (strain ATCC BAA-159 / DSM 3647 / Goe1 / Go1 / JCM 11833 / OCM 88) (Methanosarcina frisia).